The chain runs to 66 residues: Large ribosomal subunit protein uL29 (66 aa).

This sequence belongs to the universal ribosomal protein uL29 family.

The protein is Large ribosomal subunit protein uL29 of Thermotoga sp. (strain RQ2).